We begin with the raw amino-acid sequence, 98 residues long: NADH-ubiquinone oxidoreductase chain 4L (98 aa).

3 helical membrane-spanning segments follow: residues 1–21 (MSLTYMNMFMAFTISLLGLLL), 29–49 (SLLCLEGMMLSLFVMMTMTIL), and 61–81 (IILLVFAACEAALGLSLLVMV).

It belongs to the complex I subunit 4L family. In terms of assembly, core subunit of respiratory chain NADH dehydrogenase (Complex I) which is composed of 45 different subunits.

Its subcellular location is the mitochondrion inner membrane. It catalyses the reaction a ubiquinone + NADH + 5 H(+)(in) = a ubiquinol + NAD(+) + 4 H(+)(out). Its function is as follows. Core subunit of the mitochondrial membrane respiratory chain NADH dehydrogenase (Complex I) which catalyzes electron transfer from NADH through the respiratory chain, using ubiquinone as an electron acceptor. Part of the enzyme membrane arm which is embedded in the lipid bilayer and involved in proton translocation. The protein is NADH-ubiquinone oxidoreductase chain 4L (MT-ND4L) of Vampyrodes caraccioli (Great stripe-faced bat).